A 152-amino-acid chain; its full sequence is Venom protein family 1 protein 2 (152 aa).

The N-terminal stretch at 1 to 21 (MAKLVFISFLVASFCLIGCFG) is a signal peptide. Cysteine 70 and cysteine 150 are oxidised to a cystine.

Belongs to the insect vpf1 family. Expressed by the venom gland (posterior main gland) (at protein level).

The protein localises to the secreted. The sequence is that of Venom protein family 1 protein 2 from Platymeris rhadamanthus (Red spot assassin bug).